Consider the following 179-residue polypeptide: 3-hydroxyanthranilate 3,4-dioxygenase (179 aa).

An O2-binding site is contributed by arginine 47. Fe cation-binding residues include histidine 51, glutamate 57, and histidine 96. Glutamate 57 provides a ligand contact to substrate. 2 residues coordinate substrate: arginine 100 and glutamate 110. Fe cation is bound by residues cysteine 125, cysteine 128, cysteine 162, and cysteine 165.

Belongs to the 3-HAO family. The cofactor is Fe(2+).

The enzyme catalyses 3-hydroxyanthranilate + O2 = (2Z,4Z)-2-amino-3-carboxymuconate 6-semialdehyde. Its pathway is cofactor biosynthesis; NAD(+) biosynthesis; quinolinate from L-kynurenine: step 3/3. Functionally, catalyzes the oxidative ring opening of 3-hydroxyanthranilate to 2-amino-3-carboxymuconate semialdehyde, which spontaneously cyclizes to quinolinate. In Bacillus cereus (strain 03BB102), this protein is 3-hydroxyanthranilate 3,4-dioxygenase.